The sequence spans 404 residues: Probable mannosyltransferase KTR3 (404 aa).

At 1-27 (MSVHHKKKLMPKSALLIRKYQKGIRSS) the chain is on the cytoplasmic side. A helical; Signal-anchor for type II membrane protein transmembrane segment spans residues 28–44 (FIGLIIVLSFLFFMSGS). The interval 45 to 83 (RSPEVPIAQGTSVSRVASKDYLMPFTDKSQGVIHPVDDG) is stem region. Residues 45–404 (RSPEVPIAQG…AGNYKLPPGI (360 aa)) are Lumenal-facing. Positions 84-404 (KKEKGVMVTL…AGNYKLPPGI (321 aa)) are catalytic. The active-site Nucleophile is the Glu-295.

This sequence belongs to the glycosyltransferase 15 family. As to quaternary structure, interacts with SVP26.

It localises to the membrane. Its function is as follows. Possible glycosyltransferase that transfers an alpha-D-mannosyl residue from GDP-mannose into lipid-linked oligosaccharide, forming an alpha-(1-&gt;2)-D-mannosyl-D-mannose linkage. The polypeptide is Probable mannosyltransferase KTR3 (KTR3) (Saccharomyces cerevisiae (strain ATCC 204508 / S288c) (Baker's yeast)).